We begin with the raw amino-acid sequence, 542 residues long: Glutamyl-tRNA reductase 2, chloroplastic (542 aa).

Residues 142 to 145, Ser202, 207 to 209, and Gln213 contribute to the substrate site; these read TCNR and EGQ. Cys143 functions as the Nucleophile in the catalytic mechanism. An NADP(+)-binding site is contributed by 284 to 289; that stretch reads GAGKMG.

The protein belongs to the glutamyl-tRNA reductase family. Found in all tissues examined.

It localises to the plastid. The protein localises to the chloroplast. The enzyme catalyses (S)-4-amino-5-oxopentanoate + tRNA(Glu) + NADP(+) = L-glutamyl-tRNA(Glu) + NADPH + H(+). It functions in the pathway porphyrin-containing compound metabolism; protoporphyrin-IX biosynthesis; 5-aminolevulinate from L-glutamyl-tRNA(Glu): step 1/2. Functionally, catalyzes the NADPH-dependent reduction of glutamyl-tRNA(Glu) to glutamate 1-semialdehyde (GSA). The protein is Glutamyl-tRNA reductase 2, chloroplastic (HEMA2) of Cucumis sativus (Cucumber).